A 540-amino-acid chain; its full sequence is Glucose-6-phosphate isomerase (540 aa).

The Proton donor role is filled by glutamate 350. Catalysis depends on residues histidine 381 and lysine 503.

The protein belongs to the GPI family.

It is found in the cytoplasm. The enzyme catalyses alpha-D-glucose 6-phosphate = beta-D-fructose 6-phosphate. It participates in carbohydrate biosynthesis; gluconeogenesis. The protein operates within carbohydrate degradation; glycolysis; D-glyceraldehyde 3-phosphate and glycerone phosphate from D-glucose: step 2/4. Catalyzes the reversible isomerization of glucose-6-phosphate to fructose-6-phosphate. The sequence is that of Glucose-6-phosphate isomerase from Burkholderia pseudomallei (strain 668).